Reading from the N-terminus, the 61-residue chain is Protein translocase subunit SecE (61 aa).

A helical membrane pass occupies residues 39–59; that stretch reads LGIILIGLIGMLIRIMGILVL.

It belongs to the SecE/SEC61-gamma family. As to quaternary structure, component of the Sec protein translocase complex. Heterotrimer consisting of SecY (alpha), SecG (beta) and SecE (gamma) subunits. The heterotrimers can form oligomers, although 1 heterotrimer is thought to be able to translocate proteins. Interacts with the ribosome. May interact with SecDF, and other proteins may be involved.

It is found in the cell membrane. Functionally, essential subunit of the Sec protein translocation channel SecYEG. Clamps together the 2 halves of SecY. May contact the channel plug during translocation. This is Protein translocase subunit SecE from Pyrococcus abyssi (strain GE5 / Orsay).